The primary structure comprises 142 residues: Small ribosomal subunit protein bS6 (142 aa).

The segment at 103–142 (KAAESREQRAPRGEDRPARVVADDVDDSDDDTDDEDSNDE) is disordered. The segment covering 105–124 (AESREQRAPRGEDRPARVVA) has biased composition (basic and acidic residues). The span at 125 to 142 (DDVDDSDDDTDDEDSNDE) shows a compositional bias: acidic residues.

This sequence belongs to the bacterial ribosomal protein bS6 family.

In terms of biological role, binds together with bS18 to 16S ribosomal RNA. The sequence is that of Small ribosomal subunit protein bS6 from Hahella chejuensis (strain KCTC 2396).